The primary structure comprises 293 residues: MQGFINLNKQFGWTSHDCVARLRKMLRLKRVGHAGTLDPAATGVLPIAVGKATRLLQYLPSDKAYKATVRFGVQTTTDDLQGEIITSQPCRGLSLSEVKTALPQFIGKIEQIPPIYSAIQVEGKRLYDLARKGEIIEVPARTVEVFSIDVLDWREGDFPELDVAIACGSGTYIRAIARDLGAVFHTGGTLAALIRTHSSGFNLTDSLTLTDLETQLQAGTFEPTPADAALQCLPSVTLPSISAQKWCQGQRIELNLETIGKVRVYQAETNIFLGIGELQAGVLIPQMVFEPIS.

Asp38 (nucleophile) is an active-site residue.

It belongs to the pseudouridine synthase TruB family. Type 1 subfamily.

The enzyme catalyses uridine(55) in tRNA = pseudouridine(55) in tRNA. In terms of biological role, responsible for synthesis of pseudouridine from uracil-55 in the psi GC loop of transfer RNAs. The chain is tRNA pseudouridine synthase B from Nostoc sp. (strain PCC 7120 / SAG 25.82 / UTEX 2576).